We begin with the raw amino-acid sequence, 340 residues long: Nicotinate-nucleotide--dimethylbenzimidazole phosphoribosyltransferase (340 aa).

Residue Glu305 is the Proton acceptor of the active site.

The protein belongs to the CobT family.

It carries out the reaction 5,6-dimethylbenzimidazole + nicotinate beta-D-ribonucleotide = alpha-ribazole 5'-phosphate + nicotinate + H(+). It participates in nucleoside biosynthesis; alpha-ribazole biosynthesis; alpha-ribazole from 5,6-dimethylbenzimidazole: step 1/2. In terms of biological role, catalyzes the synthesis of alpha-ribazole-5'-phosphate from nicotinate mononucleotide (NAMN) and 5,6-dimethylbenzimidazole (DMB). This is Nicotinate-nucleotide--dimethylbenzimidazole phosphoribosyltransferase from Allorhizobium ampelinum (strain ATCC BAA-846 / DSM 112012 / S4) (Agrobacterium vitis (strain S4)).